The chain runs to 245 residues: tRNA pseudouridine synthase A (245 aa).

Catalysis depends on Asp-52, which acts as the Nucleophile. Residue Tyr-111 participates in substrate binding.

The protein belongs to the tRNA pseudouridine synthase TruA family. As to quaternary structure, homodimer.

The enzyme catalyses uridine(38/39/40) in tRNA = pseudouridine(38/39/40) in tRNA. In terms of biological role, formation of pseudouridine at positions 38, 39 and 40 in the anticodon stem and loop of transfer RNAs. This chain is tRNA pseudouridine synthase A, found in Thermotoga sp. (strain RQ2).